The following is a 249-amino-acid chain: General transcription factor IIF subunit 2 (249 aa).

At Ala-2 the chain carries N-acetylalanine. An N6-acetyllysine mark is found at Lys-22, Lys-33, and Lys-137. A Phosphoserine modification is found at Ser-142. Positions 227 and 229 each coordinate DNA. Residue Ser-248 is modified to Phosphoserine.

The protein belongs to the TFIIF beta subunit family. In terms of assembly, heterodimer of an alpha and a beta subunit. Interacts with HTATSF1 and GPBP1. Interacts with URI1. Interacts with GTF2B (via N-terminus); this interaction is inhibited in presence of GTF2F1. Part of TBP-based Pol II pre-initiation complex (PIC), in which Pol II core assembles with general transcription factors and other specific initiation factors including GTF2E1, GTF2E2, GTF2F1, GTF2F2, TCEA1, ERCC2, ERCC3, GTF2H2, GTF2H3, GTF2H4, GTF2H5, GTF2A1, GTF2A2, GTF2B and TBP; this large multi-subunit PIC complex mediates DNA unwinding and targets Pol II core to the transcription start site where the first phosphodiester bond forms.

The protein resides in the nucleus. Functionally, TFIIF is a general transcription initiation factor that binds to RNA polymerase II and helps to recruit it to the initiation complex in collaboration with TFIIB. The polypeptide is General transcription factor IIF subunit 2 (GTF2F2) (Bos taurus (Bovine)).